The following is a 301-amino-acid chain: Elongation factor Ts (301 aa).

Residues Thr-82–Val-85 are involved in Mg(2+) ion dislocation from EF-Tu.

The protein belongs to the EF-Ts family.

Its subcellular location is the cytoplasm. Its function is as follows. Associates with the EF-Tu.GDP complex and induces the exchange of GDP to GTP. It remains bound to the aminoacyl-tRNA.EF-Tu.GTP complex up to the GTP hydrolysis stage on the ribosome. The polypeptide is Elongation factor Ts (Hyphomonas neptunium (strain ATCC 15444)).